The primary structure comprises 806 residues: Leucine--tRNA ligase (806 aa).

Positions 38-48 match the 'HIGH' region motif; that stretch reads PYPSGEIHMGH. A 'KMSKS' region motif is present at residues 572–576; it reads KMSKS. Lys-575 is an ATP binding site.

It belongs to the class-I aminoacyl-tRNA synthetase family.

It localises to the cytoplasm. It catalyses the reaction tRNA(Leu) + L-leucine + ATP = L-leucyl-tRNA(Leu) + AMP + diphosphate. This Helicobacter pylori (strain HPAG1) protein is Leucine--tRNA ligase.